The following is a 353-amino-acid chain: Lysophosphatidic acid receptor 3 (353 aa).

At methionine 1–valine 31 the chain is on the extracellular side. An N-linked (GlcNAc...) asparagine glycan is attached at asparagine 15. Residues isoleucine 32 to isoleucine 52 traverse the membrane as a helical segment. Residues alanine 53–tyrosine 67 lie on the Cytoplasmic side of the membrane. Residues leucine 68 to phenylalanine 88 traverse the membrane as a helical segment. Topologically, residues asparagine 89 to arginine 101 are extracellular. The chain crosses the membrane as a helical span at residues tryptophan 102–alanine 124. Residues valine 125–threonine 146 are Cytoplasmic-facing. A helical membrane pass occupies residues leucine 147–tryptophan 167. Topologically, residues asparagine 168–serine 186 are extracellular. Asparagine 172 is a glycosylation site (N-linked (GlcNAc...) asparagine). Residues tyrosine 187–leucine 207 traverse the membrane as a helical segment. Residues arginine 208–threonine 240 lie on the Cytoplasmic side of the membrane. A helical membrane pass occupies residues valine 241–leucine 261. At aspartate 262–arginine 276 the chain is on the extracellular side. Residues tryptophan 277 to aspartate 297 form a helical membrane-spanning segment. Topologically, residues glutamate 298 to serine 353 are cytoplasmic. Residue cysteine 309 is the site of S-palmitoyl cysteine attachment.

It belongs to the G-protein coupled receptor 1 family. Most abundantly expressed in prostate, testes, pancreas, and heart, with moderate levels in lung and ovary. No detectable expression in brain, placenta, liver, skeletal muscle, kidney, spleen, thymus, small intestine, colon, or peripheral blood leukocytes.

Its subcellular location is the cell membrane. Functionally, receptor for lysophosphatidic acid (LPA), a mediator of diverse cellular activities. May play a role in the development of ovarian cancer. Seems to be coupled to the G(i)/G(o) and G(q) families of heteromeric G proteins. The protein is Lysophosphatidic acid receptor 3 (LPAR3) of Homo sapiens (Human).